We begin with the raw amino-acid sequence, 229 residues long: UPF0173 metal-dependent hydrolase SSP1060 (229 aa).

The protein belongs to the UPF0173 family.

This Staphylococcus saprophyticus subsp. saprophyticus (strain ATCC 15305 / DSM 20229 / NCIMB 8711 / NCTC 7292 / S-41) protein is UPF0173 metal-dependent hydrolase SSP1060.